Reading from the N-terminus, the 234-residue chain is Biosynthetic peptidoglycan transglycosylase (234 aa).

A helical transmembrane segment spans residues 8 to 28; that stretch reads VIGCFAAGVVALNLYFFAAIA.

The protein belongs to the glycosyltransferase 51 family.

It is found in the cell inner membrane. It catalyses the reaction [GlcNAc-(1-&gt;4)-Mur2Ac(oyl-L-Ala-gamma-D-Glu-L-Lys-D-Ala-D-Ala)](n)-di-trans,octa-cis-undecaprenyl diphosphate + beta-D-GlcNAc-(1-&gt;4)-Mur2Ac(oyl-L-Ala-gamma-D-Glu-L-Lys-D-Ala-D-Ala)-di-trans,octa-cis-undecaprenyl diphosphate = [GlcNAc-(1-&gt;4)-Mur2Ac(oyl-L-Ala-gamma-D-Glu-L-Lys-D-Ala-D-Ala)](n+1)-di-trans,octa-cis-undecaprenyl diphosphate + di-trans,octa-cis-undecaprenyl diphosphate + H(+). Its pathway is cell wall biogenesis; peptidoglycan biosynthesis. Functionally, peptidoglycan polymerase that catalyzes glycan chain elongation from lipid-linked precursors. The polypeptide is Biosynthetic peptidoglycan transglycosylase (Ralstonia nicotianae (strain ATCC BAA-1114 / GMI1000) (Ralstonia solanacearum)).